The primary structure comprises 377 residues: Progesterone receptor (377 aa).

The interval 1–15 is modulating, Pro-Rich; sequence EASQSPQYSFESLPQ. Residues 16–90 constitute a DNA-binding region (nuclear receptor); sequence KICLICGDEA…AGMVLGGRKF (75 aa). 2 NR C4-type zinc fingers span residues 18-38 and 54-78; these read CLIC…CGSC and CAGR…LRKC. Ser127 carries the phosphoserine modification. The region spanning 130–364 is the NR LBD domain; it reads QDLQLIPPLI…EFPEMMSEVI (235 aa). Residues 138-377 are AF2; mediates transcriptional activation; sequence LINLLMSIEP…LPKILAGMVK (240 aa).

This sequence belongs to the nuclear hormone receptor family. NR3 subfamily. Interacts with CUEDC2, SMARD1 and with UNC45A. Interacts with PRMT2. Interacts with NCOA2 and NCOA1. Interacts with KLF9. Interacts with GTF2B. Post-translationally, palmitoylated by ZDHHC7 and ZDHHC21. Palmitoylation is required for plasma membrane targeting and for rapid intracellular signaling via ERK and AKT kinases and cAMP generation.

It is found in the nucleus. Functionally, the steroid hormones and their receptors are involved in the regulation of eukaryotic gene expression and affect cellular proliferation and differentiation in target tissues. Transcriptional activator of several progesteron-dependent promoters in a variety of cell types. Involved in activation of SRC-dependent MAPK signaling on hormone stimulation. In Ovis aries (Sheep), this protein is Progesterone receptor (PGR).